The primary structure comprises 266 residues: E3 ubiquitin-protein ligase RNF170 (266 aa).

The Lumenal segment spans residues 1–26 (MEGSVCVDGAAAPAPDEASLIEGVSN). A helical membrane pass occupies residues 27–47 (AVLLVLVLSVTLLAGLTTLLC). At 48 to 209 (RSEQQRIHPE…GGLFWMFRVR (162 aa)) the chain is on the cytoplasmic side. Residues 88 to 131 (CPVCLQQAVLPVETNCGHLFCGSCIIAYWRYGTWLGAISCPICR) form an RING-type zinc finger. Residues 210–230 (ILLCVCGALAYLVSPLDFLPE) traverse the membrane as a helical segment. A topological domain (lumenal) is located at residue G231. A helical transmembrane segment spans residues 232–252 (VLGLLGFLDDFFVILLLFIYI). Over 253–266 (SIMYREVVTQRLAG) the chain is Cytoplasmic.

In terms of tissue distribution, highly expressed in the developing brain, and less within intersomitic structures of the trunk.

It localises to the endoplasmic reticulum membrane. The catalysed reaction is S-ubiquitinyl-[E2 ubiquitin-conjugating enzyme]-L-cysteine + [acceptor protein]-L-lysine = [E2 ubiquitin-conjugating enzyme]-L-cysteine + N(6)-ubiquitinyl-[acceptor protein]-L-lysine.. It participates in protein modification; protein ubiquitination. Functionally, E3 ubiquitin-protein ligase that plays an essential role in stimulus-induced inositol 1,4,5-trisphosphate receptor (ITPR) ubiquitination and degradation via the endoplasmic reticulum-associated degradation (ERAD) pathway. Also involved in ITPR turnover in resting cells. The polypeptide is E3 ubiquitin-protein ligase RNF170 (rnf170) (Danio rerio (Zebrafish)).